Reading from the N-terminus, the 379-residue chain is Homoserine O-acetyltransferase (379 aa).

The AB hydrolase-1 domain maps to 54–332 (NAILVCHALS…PYQSEEIVKS (279 aa)). Serine 159 functions as the Nucleophile in the catalytic mechanism. Arginine 228 contributes to the substrate binding site. Residues aspartate 318 and histidine 352 contribute to the active site. Substrate is bound at residue aspartate 353.

It belongs to the AB hydrolase superfamily. MetX family. In terms of assembly, homodimer.

It is found in the cytoplasm. The enzyme catalyses L-homoserine + acetyl-CoA = O-acetyl-L-homoserine + CoA. It participates in amino-acid biosynthesis; L-methionine biosynthesis via de novo pathway; O-acetyl-L-homoserine from L-homoserine: step 1/1. Functionally, transfers an acetyl group from acetyl-CoA to L-homoserine, forming acetyl-L-homoserine. This chain is Homoserine O-acetyltransferase, found in Leptospira meyeri.